The following is a 224-amino-acid chain: DNA mismatch repair protein MutH (224 aa).

This sequence belongs to the MutH family.

It is found in the cytoplasm. Sequence-specific endonuclease that cleaves unmethylated GATC sequences. It is involved in DNA mismatch repair. The sequence is that of DNA mismatch repair protein MutH from Shewanella amazonensis (strain ATCC BAA-1098 / SB2B).